Consider the following 266-residue polypeptide: Hydroxyethylthiazole kinase (266 aa).

M45 lines the substrate pocket. K121 and S167 together coordinate ATP. G194 contributes to the substrate binding site.

The protein belongs to the Thz kinase family. Mg(2+) serves as cofactor.

The catalysed reaction is 5-(2-hydroxyethyl)-4-methylthiazole + ATP = 4-methyl-5-(2-phosphooxyethyl)-thiazole + ADP + H(+). The protein operates within cofactor biosynthesis; thiamine diphosphate biosynthesis; 4-methyl-5-(2-phosphoethyl)-thiazole from 5-(2-hydroxyethyl)-4-methylthiazole: step 1/1. Functionally, catalyzes the phosphorylation of the hydroxyl group of 4-methyl-5-beta-hydroxyethylthiazole (THZ). This Methanocella arvoryzae (strain DSM 22066 / NBRC 105507 / MRE50) protein is Hydroxyethylthiazole kinase.